The primary structure comprises 394 residues: Elongation factor Tu 1 (394 aa).

Residues lysine 10–glutamine 204 form the tr-type G domain. Positions glycine 19–threonine 26 are G1. GTP is bound at residue glycine 19–threonine 26. Position 26 (threonine 26) interacts with Mg(2+). Positions glycine 60–asparagine 64 are G2. The interval aspartate 81–glycine 84 is G3. GTP is bound by residues aspartate 81–histidine 85 and asparagine 136–aspartate 139. The tract at residues asparagine 136–aspartate 139 is G4. The segment at serine 174 to leucine 176 is G5.

This sequence belongs to the TRAFAC class translation factor GTPase superfamily. Classic translation factor GTPase family. EF-Tu/EF-1A subfamily. As to quaternary structure, monomer.

Its subcellular location is the cytoplasm. It carries out the reaction GTP + H2O = GDP + phosphate + H(+). Its function is as follows. GTP hydrolase that promotes the GTP-dependent binding of aminoacyl-tRNA to the A-site of ribosomes during protein biosynthesis. The protein is Elongation factor Tu 1 of Shewanella baltica (strain OS195).